Reading from the N-terminus, the 847-residue chain is Protein IRS1 (847 aa).

Disordered stretches follow at residues 1 to 82 (MAQR…NFWH), 607 to 627 (WLMEQPPPPSRQTKPDAATMP), and 715 to 847 (QVIP…HVHH). A compositionally biased stretch (gly residues) spans 16–25 (RGRGAGGPSG). Residues 26-56 (VGSSPPSSCVPMGATSTAGTGASAAPTATPG) are compositionally biased toward low complexity. Over residues 723–733 (EPEDDDEDPTY) the composition is skewed to acidic residues. The segment covering 833-847 (RPKKCQTHAPHHVHH) has biased composition (basic residues).

The protein belongs to the herpesviridae US22 family. In terms of assembly, interacts (via N-terminus) with the viral DNA polymerase accessory subunit UL44. Interacts (via C-terminus) with host EIF2AK2.

The protein localises to the virion. It is found in the host cytoplasm. It localises to the host nucleus. In terms of biological role, acts as a transactivator along with IE2, and is required for oriLyt-dependent DNA replication in the transient transfection replication assay using native promoters. The polypeptide is Protein IRS1 (IRS1) (Human cytomegalovirus (strain Merlin) (HHV-5)).